The following is a 323-amino-acid chain: ATP synthase gamma chain (323 aa).

Residues 206 to 240 form an insert region; that stretch reads NPIVNLVGFGYKERGVKPINNRRATSDIVGESKSI.

This sequence belongs to the ATPase gamma chain family. F-type ATPases have 2 components, CF(1) - the catalytic core - and CF(0) - the membrane proton channel. CF(1) has five subunits: alpha(3), beta(3), gamma(1), delta(1), epsilon(1). CF(0) has three main subunits: a, b and c.

The protein localises to the cell inner membrane. Produces ATP from ADP in the presence of a proton gradient across the membrane. The gamma chain is believed to be important in regulating ATPase activity and the flow of protons through the CF(0) complex. The protein is ATP synthase gamma chain of Rickettsia conorii (strain ATCC VR-613 / Malish 7).